A 33-amino-acid polypeptide reads, in one-letter code: Imperacalcin (33 aa).

3 disulfide bridges follow: cysteine 3–cysteine 17, cysteine 10–cysteine 21, and cysteine 16–cysteine 32. 2 important for stimulation of [3H]ryanodine binding to RYR1 regions span residues 8–9 (KR) and 19–20 (KK). The essential for stimulation of [3H]ryanodine binding to RYR1 stretch occupies residues 22–24 (KRR). An important for stimulation of [3H]ryanodine binding to RYR1 region spans residues 25 to 27 (GTN).

Belongs to the scorpion calcin family. As to expression, expressed by the venom gland.

The protein localises to the secreted. In terms of biological role, this toxin affects the activity of ryanodine receptors 1, 2 and 3 (RyR1, RyR2 and RyR3). At lower concentrations the toxin increases full openings of the RyRs, and at higher concentrations it inhibits full openings and induces openings to subconductance levels (30% of the full conductance state) and reduces the number of full conductance openings. The different actions may be attributed to the toxins binding at different sites on the RyRs, with binding at a high-affinity site mediating the increase in full openings and the induction of subconductance states evoked upon binding to a lower-affinity site. Furthermore, it triggers calcium release from sarcoplasmic vesicles (11.7 nM are enough to induce a sharp release, and 70% of the total calcium is released after toxin (100 nM) addition) probably by acting as a cell-penetrating peptide (CPP). In addition, it has been shown to dose-dependently stimulate ryanodine binding to RyR1 (EC(50)=8.7 nM). It also augments the bell-shaped calcium-[3H]ryanodine binding curve that is maximal at about 10 uM calcium concentration. It binds a different site as ryanodine. It acts synergistically with caffeine. In vivo, intracerebroventricular injection into mice induces neurotoxic symptoms, followed by death. This is Imperacalcin from Pandinus imperator (Emperor scorpion).